We begin with the raw amino-acid sequence, 590 residues long: Acetylcholinesterase (590 aa).

The signal sequence occupies residues 1–24 (MREMNLLVTSSLGVLLHLVVLCQA). Asn-83 carries an N-linked (GlcNAc...) asparagine glycan. The cysteines at positions 91 and 118 are disulfide-linked. Ser-224 serves as the catalytic Acyl-ester intermediate. A disulfide bond links Cys-278 and Cys-289. The active-site Charge relay system is Glu-351. Residues Cys-426 and Cys-545 are joined by a disulfide bond. N-linked (GlcNAc...) asparagine glycosylation occurs at Asn-440. His-464 serves as the catalytic Charge relay system. N-linked (GlcNAc...) asparagine glycans are attached at residues Asn-481 and Asn-557. Ser-567 carries the GPI-anchor amidated serine lipid modification. The propeptide at 568–590 (SGTSSSKGIIFYVLFSILYLIFY) is removed in mature form.

This sequence belongs to the type-B carboxylesterase/lipase family. In terms of assembly, isoform H form is a homodimer; the asymmetric form is a disulfide-bonded oligomer composed of a collagenic subunit (Q) and a variable number of T catalytic subunits. In terms of processing, an interchain disulfide bond is present in what becomes position 596 of the T isoform. In terms of tissue distribution, found in the synapses and to a lower extent in extrajunctional areas of muscle and nerve, and on erythrocyte membranes.

The protein resides in the cell membrane. It localises to the synapse. It carries out the reaction acetylcholine + H2O = choline + acetate + H(+). In terms of biological role, terminates signal transduction at the neuromuscular junction by rapid hydrolysis of the acetylcholine released into the synaptic cleft. May be involved in cell-cell interactions. This Torpedo marmorata (Marbled electric ray) protein is Acetylcholinesterase (ache).